Consider the following 192-residue polypeptide: EF-hand protein 5 (192 aa).

Positions 1–36 (MKDKAPVSSQQDHFSRGGAVGGKPISDVRGTSRPFY) are disordered. EF-hand domains follow at residues 46–80 (AELAEGFRVLSNGQKTISIPMKEVSALMASVGLHL), 81–118 (SDEEFHEVMRVFGQGEQTNTEELSFKDFLSLMMCEVDD), 119–154 (TMLEEMRGAFLHYDKQKTGFVTKKQFTELFATGGEC), and 155–190 (STPEEVEELLTIAEQDETDDKIDYNRFINELIHRLN). Ca(2+) is bound by residues Thr100, Glu102, Asp107, Asp132, and Thr136.

This Trypanosoma brucei brucei protein is EF-hand protein 5.